Here is a 137-residue protein sequence, read N- to C-terminus: Nucleoside diphosphate kinase (137 aa).

Residues K9, F57, R85, T91, R102, and N112 each contribute to the ATP site. H115 acts as the Pros-phosphohistidine intermediate in catalysis.

Belongs to the NDK family. In terms of assembly, homotetramer. It depends on Mg(2+) as a cofactor.

Its subcellular location is the cytoplasm. The enzyme catalyses a 2'-deoxyribonucleoside 5'-diphosphate + ATP = a 2'-deoxyribonucleoside 5'-triphosphate + ADP. The catalysed reaction is a ribonucleoside 5'-diphosphate + ATP = a ribonucleoside 5'-triphosphate + ADP. Functionally, major role in the synthesis of nucleoside triphosphates other than ATP. The ATP gamma phosphate is transferred to the NDP beta phosphate via a ping-pong mechanism, using a phosphorylated active-site intermediate. The sequence is that of Nucleoside diphosphate kinase from Geotalea uraniireducens (strain Rf4) (Geobacter uraniireducens).